The sequence spans 401 residues: Exodeoxyribonuclease 7 large subunit (401 aa).

Belongs to the XseA family. As to quaternary structure, heterooligomer composed of large and small subunits.

It localises to the cytoplasm. It catalyses the reaction Exonucleolytic cleavage in either 5'- to 3'- or 3'- to 5'-direction to yield nucleoside 5'-phosphates.. Its function is as follows. Bidirectionally degrades single-stranded DNA into large acid-insoluble oligonucleotides, which are then degraded further into small acid-soluble oligonucleotides. The polypeptide is Exodeoxyribonuclease 7 large subunit (Thermoanaerobacter pseudethanolicus (strain ATCC 33223 / 39E) (Clostridium thermohydrosulfuricum)).